The primary structure comprises 415 residues: Diaminopimelate decarboxylase (415 aa).

At Lys-60 the chain carries N6-(pyridoxal phosphate)lysine. Residues Gly-239 and 274–277 (EPGR) contribute to the pyridoxal 5'-phosphate site. The substrate site is built by Arg-277, Arg-313, and Tyr-317. Cys-344 (proton donor) is an active-site residue. Residues Glu-345 and Tyr-372 each contribute to the substrate site. Tyr-372 contributes to the pyridoxal 5'-phosphate binding site.

Belongs to the Orn/Lys/Arg decarboxylase class-II family. LysA subfamily. Homodimer. It depends on pyridoxal 5'-phosphate as a cofactor.

The catalysed reaction is meso-2,6-diaminopimelate + H(+) = L-lysine + CO2. Its pathway is amino-acid biosynthesis; L-lysine biosynthesis via DAP pathway; L-lysine from DL-2,6-diaminopimelate: step 1/1. Functionally, specifically catalyzes the decarboxylation of meso-diaminopimelate (meso-DAP) to L-lysine. The polypeptide is Diaminopimelate decarboxylase (Haemophilus influenzae (strain ATCC 51907 / DSM 11121 / KW20 / Rd)).